Here is a 333-residue protein sequence, read N- to C-terminus: UDP-N-acetylenolpyruvoylglucosamine reductase (333 aa).

Positions 12-176 (LPAQCRALIE…TSVVFRLPKD (165 aa)) constitute an FAD-binding PCMH-type domain. Residue arginine 153 is part of the active site. The Proton donor role is filled by serine 221. Glutamate 317 is an active-site residue.

It belongs to the MurB family. It depends on FAD as a cofactor.

It is found in the cytoplasm. It catalyses the reaction UDP-N-acetyl-alpha-D-muramate + NADP(+) = UDP-N-acetyl-3-O-(1-carboxyvinyl)-alpha-D-glucosamine + NADPH + H(+). Its pathway is cell wall biogenesis; peptidoglycan biosynthesis. Cell wall formation. This chain is UDP-N-acetylenolpyruvoylglucosamine reductase, found in Idiomarina loihiensis (strain ATCC BAA-735 / DSM 15497 / L2-TR).